The sequence spans 774 residues: MKTNNLGYPRIGSNRELKKASELYWAGKISADELLDAGKEIRLKNWYLQSEAGVDLIPSNDFSFYDQVLDLTLAVGAIPQRYHELAKSNSSLDLYFAMARGSQKNGQDVVAMEMTKWFDTNYHYIVPEFTKNQKFELFSEKILNEFKEANAVGIKTKPVLIGPVSYLLLGKEKEEGFNRIDLIDALLPVYFEILEKLQIENAEYIQLDEPFLALNLTDKERNVFTKVYNEINVRFPKLKIVLANYFDCFGENLETALALPVDTFHLDLVRCQLQLDDILESGKLASNVNLSLGVVDGRNIWKNDFKKSLELIKKAADALGENRILLAPSCSLIHSPCDLDLETNDQTLTPEIKQWLAFAKQKINEVVLLKQFASGEVNPKNSADYERNVIANENRKTSKLIHNNEVKARTAGITAADDKRKSAFASRRKSQIKALNLPLFPTTTIGSFPQTTEVRSWRAKFKKGELTTEQYNDLIEKETEAAIRFQEETGIDVLVHGEFERNDMVEYFGEQLDGFTFTKNGWVQSYGSRCVKPPVIYGDVSRPNPMTVKWSKYAQSLTSKWVKGMLTGPVTILQWSFVRNDQPRSETCTQIALAVRDEVVDLEKAGIKIIQIDEPAIREGLPLRKEEWAKYLDWAVKAFRISASGVNDDTQIHPHMCYSEFNDIIQNIADMDADVITIECSRSQMELLDAFANFKYPNEIGPGVYDIHSPRVPSSKEMVRLLEKASAVIPVDQLWVNPDCGLKTRHWNETKKALIEMVAAAQEMRKAVENPVTE.

Residues 15–18 (RELK) and lysine 116 each bind 5-methyltetrahydropteroyltri-L-glutamate. L-homocysteine contacts are provided by residues 445–447 (IGS) and glutamate 498. L-methionine-binding positions include 445–447 (IGS) and glutamate 498. 5-methyltetrahydropteroyltri-L-glutamate is bound by residues 529–530 (RC) and tryptophan 575. An L-homocysteine-binding site is contributed by aspartate 613. Aspartate 613 contributes to the L-methionine binding site. Glutamate 619 contacts 5-methyltetrahydropteroyltri-L-glutamate. Histidine 655, cysteine 657, and glutamate 679 together coordinate Zn(2+). Catalysis depends on histidine 708, which acts as the Proton donor. Cysteine 740 is a Zn(2+) binding site.

This sequence belongs to the vitamin-B12 independent methionine synthase family. Zn(2+) serves as cofactor.

The enzyme catalyses 5-methyltetrahydropteroyltri-L-glutamate + L-homocysteine = tetrahydropteroyltri-L-glutamate + L-methionine. Its pathway is amino-acid biosynthesis; L-methionine biosynthesis via de novo pathway; L-methionine from L-homocysteine (MetE route): step 1/1. In terms of biological role, catalyzes the transfer of a methyl group from 5-methyltetrahydrofolate to homocysteine resulting in methionine formation. The polypeptide is 5-methyltetrahydropteroyltriglutamate--homocysteine methyltransferase (Flavobacterium johnsoniae (strain ATCC 17061 / DSM 2064 / JCM 8514 / BCRC 14874 / CCUG 350202 / NBRC 14942 / NCIMB 11054 / UW101) (Cytophaga johnsonae)).